Consider the following 512-residue polypeptide: Calcium-dependent protein kinase 18 (512 aa).

Residues 1-25 (MGLCSSSSARRDAGTPGGGNGAGNK) form a disordered region. A lipid anchor (N-myristoyl glycine) is attached at glycine 2. One can recognise a Protein kinase domain in the interval 52-312 (YALGKLLGHG…AAQALSHEWV (261 aa)). Residues 58–66 (LGHGQFGYT) and lysine 81 contribute to the ATP site. Catalysis depends on aspartate 178, which acts as the Proton acceptor. Positions 318–348 (ASDIPLDISVLHNMRQFVKYSRFKQFALRAL) are autoinhibitory domain. EF-hand domains lie at 355 to 390 (EELS…DVPW), 392 to 427 (LKGP…VHQL), 434 to 469 (KWKS…KGSI), and 472 to 499 (LLEE…ASMS). Aspartate 368, aspartate 370, asparagine 372, threonine 374, glutamate 379, aspartate 405, asparagine 407, aspartate 409, glutamate 416, aspartate 447, aspartate 449, aspartate 451, tyrosine 453, glutamate 458, aspartate 477, aspartate 479, aspartate 481, lysine 483, and glutamate 488 together coordinate Ca(2+).

This sequence belongs to the protein kinase superfamily. Ser/Thr protein kinase family. CDPK subfamily. In terms of assembly, interacts with MPK5. In terms of processing, autophosphorylated. Phosphorylated by MPK5.

The protein resides in the cell membrane. The enzyme catalyses L-seryl-[protein] + ATP = O-phospho-L-seryl-[protein] + ADP + H(+). The catalysed reaction is L-threonyl-[protein] + ATP = O-phospho-L-threonyl-[protein] + ADP + H(+). With respect to regulation, activated by calcium. Autophosphorylation may play an important role in the regulation of the kinase activity. Its function is as follows. May play a role in signal transduction pathways that involve calcium as a second messenger. Functions upstream of MPK5 in a signaling pathway that represses defense gene expression and negatively regulates resistance to rice blast fungus. Phosphorylates MPK5 at Thr-14 and Thr-32 and activates MPK5 independently of MAP kinase kinase (MKK) phosphorylation. May be involved in arbuscular mycorrhizal presymbiotic phase signaling. Phosphorylates the elicitor-responsive protein ERG1 in vitro. Phosphorylation is calcium-dependent. The sequence is that of Calcium-dependent protein kinase 18 from Oryza sativa subsp. japonica (Rice).